The sequence spans 187 residues: Casparian strip membrane protein 5 (187 aa).

At 1–24 the chain is on the cytoplasmic side; the sequence is MKSGQAEIVETSKGIQKSGLMSRR. A helical membrane pass occupies residues 25 to 45; that stretch reads IAILEFILRIVAFFNTIGSAI. Residues 46–74 are Extracellular-facing; that stretch reads LMGTTHETLPFFTQFIRFQAEYNDLPALT. Residues 75–95 traverse the membrane as a helical segment; sequence FFVVANAVVSGYLIMSLTLAF. The Cytoplasmic segment spans residues 96–107; sequence VHIVKRKTQNTR. A helical transmembrane segment spans residues 108–128; it reads ILLIVLDVAMLGLLSAGASSA. Over 129-161 the chain is Extracellular; it reads AAIVYLAHNGNNKTNWFAICQQFNSFCERISGS. N-linked (GlcNAc...) asparagine glycosylation is present at asparagine 140. The helical transmembrane segment at 162 to 182 threads the bilayer; that stretch reads LIGSFIAVVLLILLILLSAIA. At 183-187 the chain is on the cytoplasmic side; it reads LSRRH.

It belongs to the Casparian strip membrane proteins (CASP) family. In terms of assembly, homodimer and heterodimers.

The protein resides in the cell membrane. Functionally, regulates membrane-cell wall junctions and localized cell wall deposition. Required for establishment of the Casparian strip membrane domain (CSD) and the subsequent formation of Casparian strips, a cell wall modification of the root endodermis that determines an apoplastic barrier between the intraorganismal apoplasm and the extraorganismal apoplasm and prevents lateral diffusion. The protein is Casparian strip membrane protein 5 of Arabidopsis lyrata subsp. lyrata (Lyre-leaved rock-cress).